The chain runs to 223 residues: Global nitrogen regulator (223 aa).

In terms of domain architecture, HTH crp-type spans 143–216; sequence RDMGSRLVSF…KKKITVHKPV (74 aa). Residues 176–195 constitute a DNA-binding region (H-T-H motif); it reads HQAIAEAIGSTRVTVTRLLG.

In terms of biological role, required for full expression of proteins subject to ammonium repression. Transcriptional activator of genes subject to nitrogen control. Has affinity for the xisA upstream region. Binds to a 66 bp region containing three repeats of the consensus recognition sequence 5'-ACATT-3'. The protein is Global nitrogen regulator (ntcA) of Nostoc sp. (strain PCC 7120 / SAG 25.82 / UTEX 2576).